A 202-amino-acid chain; its full sequence is Holliday junction branch migration complex subunit RuvA (202 aa).

The tract at residues 1 to 64 (MIGRLRGSLA…EDAHLLYGFY (64 aa)) is domain I. The tract at residues 65–143 (EKRERELFRE…AWESLPGTFT (79 aa)) is domain II. The flexible linker stretch occupies residues 144-153 (LVSNGPNQAE). A domain III region spans residues 154–202 (PVASAESDAVSALISLGYKPQEASKAVSAIKEKDLSSADLIRRALKGMG).

This sequence belongs to the RuvA family. As to quaternary structure, homotetramer. Forms an RuvA(8)-RuvB(12)-Holliday junction (HJ) complex. HJ DNA is sandwiched between 2 RuvA tetramers; dsDNA enters through RuvA and exits via RuvB. An RuvB hexamer assembles on each DNA strand where it exits the tetramer. Each RuvB hexamer is contacted by two RuvA subunits (via domain III) on 2 adjacent RuvB subunits; this complex drives branch migration. In the full resolvosome a probable DNA-RuvA(4)-RuvB(12)-RuvC(2) complex forms which resolves the HJ.

The protein localises to the cytoplasm. Functionally, the RuvA-RuvB-RuvC complex processes Holliday junction (HJ) DNA during genetic recombination and DNA repair, while the RuvA-RuvB complex plays an important role in the rescue of blocked DNA replication forks via replication fork reversal (RFR). RuvA specifically binds to HJ cruciform DNA, conferring on it an open structure. The RuvB hexamer acts as an ATP-dependent pump, pulling dsDNA into and through the RuvAB complex. HJ branch migration allows RuvC to scan DNA until it finds its consensus sequence, where it cleaves and resolves the cruciform DNA. This Pseudomonas savastanoi pv. phaseolicola (strain 1448A / Race 6) (Pseudomonas syringae pv. phaseolicola (strain 1448A / Race 6)) protein is Holliday junction branch migration complex subunit RuvA.